The primary structure comprises 178 residues: Fibroin heavy chain (178 aa).

A signal peptide spans 1–21 (MRVKTFVILCCALQYVAYTNA). Positions 149-178 (AVGAGAGAGAAAGSGAGAGAGYGAASGAGA) are highly repetitive.

In terms of assembly, silk fibroin elementary unit consists in a disulfide-linked heavy and light chain and a p25 glycoprotein in molar ratios of 6:6:1. This results in a complex of approximately 2.3 MDa. In terms of processing, the interchain disulfide bridge is essential for the intracellular transport and secretion of fibroin. As to expression, produced exclusively in the posterior (PSG) section of silk glands, which are essentially modified salivary glands.

Core component of the silk filament; a strong, insoluble and chemically inert fiber. The polypeptide is Fibroin heavy chain (FIBH) (Bombyx mandarina (Wild silk moth)).